Consider the following 267-residue polypeptide: Putative methylsterol monooxygenase DDB_G0270946 (267 aa).

Transmembrane regions (helical) follow at residues 31–51 (FIAH…ADFI), 72–92 (YCAI…MYIF), and 110–130 (IPYL…YFYW). The Fatty acid hydroxylase domain maps to 119-249 (SSFIIEDFYF…FTYLDKIFGT (131 aa)). Positions 132–136 (HRALH) match the Histidine box-1 motif. Residues 145–149 (HKVHH) carry the Histidine box-2 motif. The short motif at 224 to 230 (FHDYHHE) is the Histidine box-3 element.

It belongs to the sterol desaturase family. Requires Fe cation as cofactor.

The protein localises to the endoplasmic reticulum membrane. The catalysed reaction is 4,4-dimethyl-5alpha-cholest-7-en-3beta-ol + 6 Fe(II)-[cytochrome b5] + 3 O2 + 5 H(+) = 4alpha-carboxy-4beta-methyl-5alpha-cholest-7-ene-3beta-ol + 6 Fe(III)-[cytochrome b5] + 4 H2O. Its pathway is steroid biosynthesis; zymosterol biosynthesis; zymosterol from lanosterol: step 3/6. The chain is Putative methylsterol monooxygenase DDB_G0270946 from Dictyostelium discoideum (Social amoeba).